Reading from the N-terminus, the 516-residue chain is 2,3-bisphosphoglycerate-independent phosphoglycerate mutase (516 aa).

Residues Asp-15 and Ser-65 each coordinate Mn(2+). Ser-65 acts as the Phosphoserine intermediate in catalysis. Substrate-binding positions include His-126, Arg-156 to Asp-157, Arg-188, Arg-194, Arg-263 to Arg-266, and Lys-336. 5 residues coordinate Mn(2+): Asp-403, His-407, Asp-444, His-445, and His-463.

The protein belongs to the BPG-independent phosphoglycerate mutase family. As to quaternary structure, monomer. The cofactor is Mn(2+).

It carries out the reaction (2R)-2-phosphoglycerate = (2R)-3-phosphoglycerate. The protein operates within carbohydrate degradation; glycolysis; pyruvate from D-glyceraldehyde 3-phosphate: step 3/5. Its function is as follows. Catalyzes the interconversion of 2-phosphoglycerate and 3-phosphoglycerate. The sequence is that of 2,3-bisphosphoglycerate-independent phosphoglycerate mutase from Francisella tularensis subsp. holarctica (strain OSU18).